Reading from the N-terminus, the 335-residue chain is UDP-N-acetylglucosamine--N-acetylmuramyl-(pentapeptide) pyrophosphoryl-undecaprenol N-acetylglucosamine transferase (335 aa).

Residues 9 to 11 (TGG), Asn123, Ser176, and Gln274 each bind UDP-N-acetyl-alpha-D-glucosamine.

The protein belongs to the glycosyltransferase 28 family. MurG subfamily.

It is found in the cell inner membrane. The catalysed reaction is di-trans,octa-cis-undecaprenyl diphospho-N-acetyl-alpha-D-muramoyl-L-alanyl-D-glutamyl-meso-2,6-diaminopimeloyl-D-alanyl-D-alanine + UDP-N-acetyl-alpha-D-glucosamine = di-trans,octa-cis-undecaprenyl diphospho-[N-acetyl-alpha-D-glucosaminyl-(1-&gt;4)]-N-acetyl-alpha-D-muramoyl-L-alanyl-D-glutamyl-meso-2,6-diaminopimeloyl-D-alanyl-D-alanine + UDP + H(+). It functions in the pathway cell wall biogenesis; peptidoglycan biosynthesis. Cell wall formation. Catalyzes the transfer of a GlcNAc subunit on undecaprenyl-pyrophosphoryl-MurNAc-pentapeptide (lipid intermediate I) to form undecaprenyl-pyrophosphoryl-MurNAc-(pentapeptide)GlcNAc (lipid intermediate II). In Campylobacter fetus subsp. fetus (strain 82-40), this protein is UDP-N-acetylglucosamine--N-acetylmuramyl-(pentapeptide) pyrophosphoryl-undecaprenol N-acetylglucosamine transferase.